The sequence spans 536 residues: CTP synthase (536 aa).

Positions 1 to 268 (MSTKYVFVTG…DNLVCEKLHL (268 aa)) are amidoligase domain. Ser14 serves as a coordination point for CTP. Ser14 serves as a coordination point for UTP. 15–20 (ALGKGI) lines the ATP pocket. Tyr55 contributes to the L-glutamine binding site. Asp72 contributes to the ATP binding site. Residues Asp72 and Glu142 each contribute to the Mg(2+) site. CTP contacts are provided by residues 149–151 (DIE), 189–194 (KTKPTQ), and Lys225. UTP contacts are provided by residues 189-194 (KTKPTQ) and Lys225. The 243-residue stretch at 293–535 (KIALVGKYVE…IKAALEENKS (243 aa)) folds into the Glutamine amidotransferase type-1 domain. Position 355 (Gly355) interacts with L-glutamine. Cys382 acts as the Nucleophile; for glutamine hydrolysis in catalysis. L-glutamine is bound by residues 383–386 (LGMQ), Glu406, and Arg463. Catalysis depends on residues His508 and Glu510.

This sequence belongs to the CTP synthase family. Homotetramer.

It catalyses the reaction UTP + L-glutamine + ATP + H2O = CTP + L-glutamate + ADP + phosphate + 2 H(+). The catalysed reaction is L-glutamine + H2O = L-glutamate + NH4(+). It carries out the reaction UTP + NH4(+) + ATP = CTP + ADP + phosphate + 2 H(+). It participates in pyrimidine metabolism; CTP biosynthesis via de novo pathway; CTP from UDP: step 2/2. With respect to regulation, allosterically activated by GTP, when glutamine is the substrate; GTP has no effect on the reaction when ammonia is the substrate. The allosteric effector GTP functions by stabilizing the protein conformation that binds the tetrahedral intermediate(s) formed during glutamine hydrolysis. Inhibited by the product CTP, via allosteric rather than competitive inhibition. In terms of biological role, catalyzes the ATP-dependent amination of UTP to CTP with either L-glutamine or ammonia as the source of nitrogen. Regulates intracellular CTP levels through interactions with the four ribonucleotide triphosphates. This is CTP synthase from Clostridium beijerinckii (strain ATCC 51743 / NCIMB 8052) (Clostridium acetobutylicum).